The chain runs to 1486 residues: MENETIVDNSLNNKSNVNNSNNDINNSKSNNNNTNTNYNNNHNNTTTTTTINKTEEKQNDSPKDSEFEFLDELKGVDDQHHVFSSEDESYTNGNKKRKQTDTPLSPNQDLKKRSITSPTTSPTTSTSTSTSTSTSTSTSTIINNNNNNLKDKTKEEIEFIKHIRSQLVKPKFLKDKPNFPLRSSGGNWIFVGKLPSLQSTTTDNTTLMSPNNATTTNGSSSNISTTTTTTTTTTPTTKILYRVNGFLSDNETIDSIEINFGDPRDRYEIERLHSSRINNPFELPCVSFKNPLFIKSNIAKDIGISNEYGGMNDSFEFSNQPPPPSPPPPPPPTLPPPPPPTLPPQHSLEQQSTKQQIFTQQQQQQQQQQQQQQQQQQQQQQQQQQQQQQQQQIPKINQQHYSTQPSVLIDDIYDPSNPTEPISPHQDHYPNFIFSKLQRYEHLPTRNPISQYDYRDRPRDWERDRDRDWERDRDWERDRDRERDRDRDRDWERDRDWERDRDWERDRDRDRDWERDRDRDWERDRDRDWERDRERDRDRYDRQTNFSPAPQSTTTSASTSSTTSSTDKNSNNTTSTSVSATTSTTKRKSKFSEPIEPSPFAIQIPRDNIKINGNLINNSSSSSSSGNNNNNNNNNNNNNNNNNNNNNNNNNNNNNSNNNNNNSDVKDIKDKLLKQFKIYDPVNVYMDESYWYIDFRSSESRERAIQVLNGSFIDTWKLNVDNKKTNTINEELQKQKQLENDSNNNKPNNFNLLENERSLKEICKLLVATELLSTSSKDISKNFIEAEILKTIKLLDSQRIDPLTQNSTIINNTTNTTTSNINNTSNNTTVTPIVTPKSIISAPTSRDSPRGGRSSSTTTKKPSKLDLNGSGVPPTLKKLDTIKQQQQPQPPLSPLKRPPKSHFYSDSEDDGNNNNDDDDDDDDDEDDDFDQELSPLHSSRDSKKNIKSIIKKKPIYSDDDDDHYHHHNHHHNHHHHHHHDRSEVELYNESDLQVDVLDSDNENQDESDYHKSSDNFGHVELSDDDNEFDSLDTDQDLYDTEENDNGKKSNKRPRKSKFNGKSKKPTTTTSTTTTATKSKGRSKKTTITTPTHNIPVLDEIQSNLDDEDASYVSMVMAADKDIKLLFSTKSEEGFEDSSQEILSTPTRTKPSRNRKERNLPFLDEEDDESFKQLPQPQQKQEKQEKHEHKLKNKELKQKNNEVIINKTEEHFSENLNGDNNNNNDKSENENENENENKNENENDNNNLNTSIDNINGVERRSITGCARSEGYTRSDIQKLFKRKQVAPTGKRGAASSASSGSNSSSSSTAESFETGGNLSKSARSSRFDNRGFGSDPITLASLKSRRKRIKFERSDIHDWGLFAMETISAKDMVIEYIGEVIRQKVADEREKRYVKKGIGSSYLFRVDDDTIIDATFKGNLARFINHCCDPNCIAKVLTIGNQKKIIIYAKRDINIGEEITYDYKFPIEDVKIPCLCKSPKCRQTLN.

Disordered regions lie at residues 1–64 (MENE…SPKD), 83–148 (FSSE…NNNN), 201–231 (TTDN…TTTT), 309–360 (GGMN…IFTQ), 409–429 (IDDI…QDHY), and 532–665 (DRER…NSDV). Residues 9-52 (NSLNNKSNVNNSNNDINNSKSNNNNTNTNYNNNHNNTTTTTTIN) show a composition bias toward low complexity. A compositionally biased stretch (basic and acidic residues) spans 53 to 64 (KTEEKQNDSPKD). The span at 115-148 (ITSPTTSPTTSTSTSTSTSTSTSTSTIINNNNNN) shows a compositional bias: low complexity. Residues 201-210 (TTDNTTLMSP) are compositionally biased toward polar residues. Over residues 211–231 (NNATTTNGSSSNISTTTTTTT) the composition is skewed to low complexity. Residues 320–343 (QPPPPSPPPPPPPTLPPPPPPTLP) are compositionally biased toward pro residues. Residues 347–359 (SLEQQSTKQQIFT) show a composition bias toward polar residues. A coiled-coil region spans residues 359 to 400 (TQQQQQQQQQQQQQQQQQQQQQQQQQQQQQQQQQIPKINQQH). Residues 532-542 (DRERDRDRYDR) are compositionally biased toward basic and acidic residues. Composition is skewed to low complexity over residues 552–584 (STTT…TTST) and 617–663 (NNSS…NNNS). Residues 717 to 744 (KLNVDNKKTNTINEELQKQKQLENDSNN) are a coiled coil. Composition is skewed to low complexity over residues 812–829 (NTTN…NNTT) and 843–860 (PTSR…TTTK). 3 disordered regions span residues 812-1103 (NTTN…IQSN), 1130-1255 (SEEG…DNIN), and 1278-1327 (KLFK…SSRF). Over residues 906-931 (DSEDDGNNNNDDDDDDDDDEDDDFDQ) the composition is skewed to acidic residues. Basic residues-rich tracts occupy residues 945–954 (NIKSIIKKKP) and 965–979 (HHHN…HHHH). Acidic residues-rich tracts occupy residues 997–1006 (LDSDNENQDE) and 1022–1043 (SDDD…TEEN). Basic residues predominate over residues 1048 to 1064 (KSNKRPRKSKFNGKSKK). The segment covering 1065–1077 (PTTTTSTTTTATK) has biased composition (low complexity). Polar residues predominate over residues 1139–1148 (QEILSTPTRT). Positions 1177 to 1255 (QQKQEKQEKH…NLNTSIDNIN (79 aa)) form a coiled coil. Basic and acidic residues predominate over residues 1179–1199 (KQEKQEKHEHKLKNKELKQKN). The span at 1213–1223 (ENLNGDNNNNN) shows a compositional bias: low complexity. Residues 1224-1240 (DKSENENENENENKNEN) are compositionally biased toward basic and acidic residues. Composition is skewed to low complexity over residues 1243 to 1255 (DNNN…DNIN) and 1292 to 1316 (GAAS…ETGG). The region spanning 1347–1464 (KRIKFERSDI…IGEEITYDYK (118 aa)) is the SET domain. Tyr-1463 is a binding site for S-adenosyl-L-methionine. Residues 1470–1486 (VKIPCLCKSPKCRQTLN) form the Post-SET domain.

It belongs to the class V-like SAM-binding methyltransferase superfamily. As to quaternary structure, component of the Set1C/COMPASS complex.

The protein localises to the nucleus. It is found in the chromosome. It catalyses the reaction L-lysyl(4)-[histone H3] + 3 S-adenosyl-L-methionine = N(6),N(6),N(6)-trimethyl-L-lysyl(4)-[histone H3] + 3 S-adenosyl-L-homocysteine + 3 H(+). The catalysed reaction is N(6)-methyl-L-lysyl(4)-[histone H3] + S-adenosyl-L-methionine = N(6),N(6)-dimethyl-L-lysyl(4)-[histone H3] + S-adenosyl-L-homocysteine + H(+). It carries out the reaction N(6),N(6)-dimethyl-L-lysyl(4)-[histone H3] + S-adenosyl-L-methionine = N(6),N(6),N(6)-trimethyl-L-lysyl(4)-[histone H3] + S-adenosyl-L-homocysteine + H(+). In terms of biological role, catalytic component of the COMPASS (Set1C) complex that specifically mono-, di- and trimethylates histone H3 to form H3K4me1/2/3. Binds RNAs which might negatively affect its histone methyltransferase activity. COMPASS recognizes ubiquitinated H2B on one face of the nucleosome which stimulates the methylation of H3 on the opposing face. May act to regulate chromatin-mediated events. The chain is Histone-lysine N-methyltransferase set1 (set1) from Dictyostelium discoideum (Social amoeba).